The following is a 249-amino-acid chain: MPRKFFVGGNFKMNGTAKSITHIITNLNSAKLDPSTEIVIAPPAIYLVLARQLANGQVAVSAQNVFDKPNGAFTGELSVEQLRDEKITWTLAGHSERRVLLREDDEFVARKTKAAINGGLNVILCIGESLEEREAGKTIDVVTRQLDAVAEEVSPAEWNKVVIAYEPIWAIGTGKVATTEQAQEVHASIRKWLNEKISPEAAENIRVIYGGSVTENNCRDLAAQPDVDGFLVGGASLKPAFVDIINARL.

Residues Asn-10 and Lys-12 each contribute to the substrate site. His-94 serves as the catalytic Electrophile. Glu-166 functions as the Proton acceptor in the catalytic mechanism.

This sequence belongs to the triosephosphate isomerase family. As to quaternary structure, homodimer. In terms of processing, the N-terminus is blocked.

It catalyses the reaction D-glyceraldehyde 3-phosphate = dihydroxyacetone phosphate. Its pathway is carbohydrate biosynthesis; gluconeogenesis. It participates in carbohydrate degradation; glycolysis; D-glyceraldehyde 3-phosphate from glycerone phosphate: step 1/1. The polypeptide is Triosephosphate isomerase (TPI1) (Paracoccidioides lutzii (strain ATCC MYA-826 / Pb01) (Paracoccidioides brasiliensis)).